Consider the following 476-residue polypeptide: Protein transport protein Sec61 subunit alpha (476 aa).

Residues 2–33 (GIKFLEVIKPFCAVLPEIQKPERKIQFREKVL) lie on the Cytoplasmic side of the membrane. Residues 34–53 (WTAITLFIFLVCCQIPLFGI) traverse the membrane as a helical segment. Over 54–76 (MSSDSADPFYWMRVILASNRGTL) the chain is Lumenal. A helical transmembrane segment spans residues 77-96 (MELGISPIVTSGLIMQLLAG). Over 97–117 (AKIIGVGDTPKDRALFNGAQK) the chain is Cytoplasmic. The chain crosses the membrane as a helical span at residues 118-138 (LFGMIITIGQAIVYVMTGMYG). Topologically, residues 139-144 (DPSEMG) are lumenal. The chain crosses the membrane as a helical span at residues 145-165 (AGICLLIIIQLFVAGLIVLLL). Residues 166-172 (DELLQKG) are Cytoplasmic-facing. Residues 173 to 193 (YGLGSGISLFIATNICETIVW) traverse the membrane as a helical segment. At 194–240 (KAFSPTTVNTGRGTEFEGAIIALFHLLATRTDKVRALREGFYRQNLP) the chain is on the lumenal side. The helical transmembrane segment at 241–261 (NLMNLIATVFVFAVVIYFQGF) threads the bilayer. At 262–288 (RVDLPIKSARYRGQYNTYPIKLFYTSN) the chain is on the cytoplasmic side. The helical transmembrane segment at 289–309 (IPIILQSALVSNLYVISQMLS) threads the bilayer. The Lumenal segment spans residues 310 to 354 (TRFSGNFLVNLLGTWSDATSGGPARAYPVAGLCYYLSPPESFGSV). A helical membrane pass occupies residues 355–375 (LDDPVHAGIYIVFMLGSCAFF). The Cytoplasmic segment spans residues 376 to 420 (SKTWIEVSGSSAKDVAKQLKEQQMVMRGHRETSMVHELNRYIPTA). A helical transmembrane segment spans residues 421–441 (AAFGGLCIGGLSVMADFLGAI). At 442–445 (GSGT) the chain is on the lumenal side. Residues 446–462 (GILLAVTIIYQYFEIFV) form a helical membrane-spanning segment. The Cytoplasmic portion of the chain corresponds to 463–476 (KEQSEVGSMGALLF).

The protein belongs to the SecY/SEC61-alpha family. The SEC61 channel-forming translocon complex consists of channel-forming core components SEC61A1, SEC61B and SEC61G and different auxiliary components such as SEC62 and SEC63. The SEC61 channel associates with the multi-pass translocon (MPT) complex.

It is found in the endoplasmic reticulum membrane. Functionally, component of SEC61 channel-forming translocon complex that mediates transport of signal peptide-containing precursor polypeptides across the endoplasmic reticulum (ER). Forms a ribosome receptor and a gated pore in the ER membrane, both functions required for cotranslational translocation of nascent polypeptides. May cooperate with auxiliary protein SEC62, SEC63 and HSPA5/BiP to enable post-translational transport of small presecretory proteins. The SEC61 channel is also involved in ER membrane insertion of transmembrane proteins: it mediates membrane insertion of the first few transmembrane segments of proteins, while insertion of subsequent transmembrane regions of multi-pass membrane proteins is mediated by the multi-pass translocon (MPT) complex. This Hemitripterus americanus (Sea raven) protein is Protein transport protein Sec61 subunit alpha (sec61a).